The sequence spans 201 residues: Molybdenum cofactor guanylyltransferase (201 aa).

GTP is bound by residues 15-17, Lys28, Asp74, and Asp104; that span reads LAG. Asp104 is a Mg(2+) binding site.

Belongs to the MobA family. Monomer. Requires Mg(2+) as cofactor.

The protein localises to the cytoplasm. It carries out the reaction Mo-molybdopterin + GTP + H(+) = Mo-molybdopterin guanine dinucleotide + diphosphate. Its function is as follows. Transfers a GMP moiety from GTP to Mo-molybdopterin (Mo-MPT) cofactor (Moco or molybdenum cofactor) to form Mo-molybdopterin guanine dinucleotide (Mo-MGD) cofactor. The chain is Molybdenum cofactor guanylyltransferase from Pseudomonas syringae pv. syringae (strain B728a).